The primary structure comprises 171 residues: tRNA-splicing endonuclease subunit Sen15 (171 aa).

The interval 1–35 (MEERGDSEPTPGCSGLGPGGVRGFGDGGGAPSWAP) is disordered. S7 is modified (phosphoserine). A compositionally biased stretch (gly residues) spans 14–30 (SGLGPGGVRGFGDGGGA). S168 carries the phosphoserine modification.

The protein belongs to the SEN15 family. In terms of assembly, homodimer. tRNA splicing endonuclease is a heterotetramer composed of TSEN2, TSEN15, TSEN34/LENG5 and TSEN54. tRNA splicing endonuclease complex also contains proteins of the Pre-mRNA 3' end processing machinery, such as CLP1, CPSF1, CPSF4 and CSTF2. Widely expressed. Highly expressed in testis and uterus.

The protein resides in the nucleus. It localises to the nucleolus. In terms of biological role, non-catalytic subunit of the tRNA-splicing endonuclease complex, a complex responsible for identification and cleavage of the splice sites in pre-tRNA. It cleaves pre-tRNA at the 5' and 3' splice sites to release the intron. The products are an intron and two tRNA half-molecules bearing 2',3' cyclic phosphate and 5'-OH termini. There are no conserved sequences at the splice sites, but the intron is invariably located at the same site in the gene, placing the splice sites an invariant distance from the constant structural features of the tRNA body. The tRNA splicing endonuclease is also involved in mRNA processing via its association with pre-mRNA 3'-end processing factors, establishing a link between pre-tRNA splicing and pre-mRNA 3'-end formation, suggesting that the endonuclease subunits function in multiple RNA-processing events. The protein is tRNA-splicing endonuclease subunit Sen15 (TSEN15) of Homo sapiens (Human).